A 230-amino-acid chain; its full sequence is Orotidine 5'-phosphate decarboxylase (230 aa).

Substrate contacts are provided by residues D10, K32, 59 to 68 (DLKYHDIPNT), T119, R180, Q189, G209, and R210. K61 functions as the Proton donor in the catalytic mechanism.

Belongs to the OMP decarboxylase family. Type 1 subfamily. In terms of assembly, homodimer.

The enzyme catalyses orotidine 5'-phosphate + H(+) = UMP + CO2. Its pathway is pyrimidine metabolism; UMP biosynthesis via de novo pathway; UMP from orotate: step 2/2. Catalyzes the decarboxylation of orotidine 5'-monophosphate (OMP) to uridine 5'-monophosphate (UMP). In Actinobacillus pleuropneumoniae serotype 5b (strain L20), this protein is Orotidine 5'-phosphate decarboxylase.